A 135-amino-acid chain; its full sequence is Protein PsiE homolog (135 aa).

The next 4 membrane-spanning stretches (helical) occupy residues 13–33, 54–74, 82–102, and 107–127; these read VLQWILNIGLMALAAILVIFL, YMLVEGIVIYFLYFEFIALIV, HFPLRYFIYIGITAIIRLIIV, and PNDTLIYSFAILVLVIALYLA.

It belongs to the PsiE family.

It localises to the cell inner membrane. This chain is Protein PsiE homolog, found in Edwardsiella ictaluri (strain 93-146).